The following is an 85-amino-acid chain: Homeobox protein knotted-1-like 4 (85 aa).

The 21-residue stretch at 1 to 21 (ELKYQLLKKYSGYLSSLRQEF) folds into the ELK domain. The segment at residues 22–85 (SKKKKKGKLP…NQRKRHWKPS (64 aa)) is a DNA-binding region (homeobox; TALE-type).

It belongs to the TALE/KNOX homeobox family. Strongly expressed in ear inflorescence primordia and shoot meristem. Weakly expressed in embryos. Absent from leaves.

It is found in the nucleus. Probably binds to the DNA sequence 5'-TGAC-3'. This Zea mays (Maize) protein is Homeobox protein knotted-1-like 4 (KNOX4).